A 342-amino-acid chain; its full sequence is Polygalacturonase inhibitor 3 (342 aa).

The signal sequence occupies residues 1–29; sequence MTQFNIPVTMSSSLSIILVILVSLRTALS. 2 disulfides stabilise this stretch: cysteine 32–cysteine 62 and cysteine 63–cysteine 72. N-linked (GlcNAc...) asparagine glycosylation occurs at asparagine 64. 10 LRR repeats span residues 82-107, 108-132, 133-156, 157-180, 181-205, 206-228, 229-252, 253-275, 276-299, and 300-319; these read NNLD…LPYL, NFLY…LTQL, HYLY…IKTL, VTLD…LPNL, VGIT…SKLF, TSMT…NLNL, AFVD…DKNT, QKIH…SKNL, NGLD…LKFL, and HSLN…GGNL. Residue asparagine 141 is glycosylated (N-linked (GlcNAc...) asparagine). A glycan (N-linked (GlcNAc...) asparagine) is linked at asparagine 303. Disulfide bonds link cysteine 310-cysteine 332 and cysteine 334-cysteine 341.

Belongs to the polygalacturonase-inhibiting protein family. As to expression, found in suspension-cultured cells and to a lesser extent in hypocotyls, leaves and flowers.

It localises to the secreted. It is found in the cell wall. The protein resides in the membrane. Its function is as follows. Inhibitor of fungal polygalacturonase. It is an important factor for plant resistance to phytopathogenic fungi. The chain is Polygalacturonase inhibitor 3 (PGIP3) from Phaseolus vulgaris (Kidney bean).